Here is a 309-residue protein sequence, read N- to C-terminus: DSC E3 ubiquitin ligase complex subunit C (309 aa).

Asparagine 61 carries N-linked (GlcNAc...) asparagine glycosylation. 2 disordered regions span residues 88 to 110 (LPPS…GKGK) and 148 to 177 (EQAD…FDRL). 2 helical membrane-spanning segments follow: residues 257-277 (DDML…AMWL) and 289-309 (GLAV…RIMN).

Belongs to the dsc3 family. Component of the DSC E3 ubiquitin ligase complex composed of dscA, dscB, dscC and dscD.

Its subcellular location is the endoplasmic reticulum membrane. It participates in protein modification; protein ubiquitination. Functionally, component of the DSC E3 ubiquitin ligase complex which is required for the srbA transcriptional activator proteolytic cleavage to release the soluble transcription factor from the membrane in low oxygen or sterol conditions. Required for growth during hypoxia and triazole drug susceptibility, as well as for virulence in a murine model of invasive pulmonary aspergillosis (IPA). The protein is DSC E3 ubiquitin ligase complex subunit C of Aspergillus fumigatus (strain CBS 144.89 / FGSC A1163 / CEA10) (Neosartorya fumigata).